The primary structure comprises 305 residues: Diacylglycerol kinase (305 aa).

The DAGKc domain maps to 1 to 132 (MRKRARIIYN…VDIGKMNSRY (132 aa)). ATP contacts are provided by residues 10–14 (NPTSG), Thr-41, 67–73 (GDGTLNE), and Thr-94. Positions 213, 216, and 218 each coordinate Mg(2+). Glu-273 (proton acceptor) is an active-site residue.

Belongs to the diacylglycerol/lipid kinase family. In terms of assembly, homodimer. The cofactor is Mg(2+).

The catalysed reaction is a 1,2-diacyl-sn-glycerol + ATP = a 1,2-diacyl-sn-glycero-3-phosphate + ADP + H(+). Its function is as follows. Catalyzes the phosphorylation of diacylglycerol (DAG) into phosphatidic acid. Is a key enzyme involved in the production of lipoteichoic acid by reintroducing DAG formed from the breakdown of membrane phospholipids into the phosphatidylglycerol biosynthetic pathway. The polypeptide is Diacylglycerol kinase (dagK) (Staphylococcus saprophyticus subsp. saprophyticus (strain ATCC 15305 / DSM 20229 / NCIMB 8711 / NCTC 7292 / S-41)).